The sequence spans 333 residues: Transcription initiation factor IIB (333 aa).

The segment at 33 to 64 (EVYKCPICGNDKFVYNYERGEAVCIVCGAVVQ) adopts a TFIIB-type zinc-finger fold. Residues cysteine 37, cysteine 40, cysteine 56, and cysteine 59 each contribute to the Zn(2+) site. A run of 2 repeats spans residues 149 to 232 (QELE…LREL) and 243 to 324 (LYIS…ELAK).

The protein belongs to the TFIIB family.

Functionally, stabilizes TBP binding to an archaeal box-A promoter. Also responsible for recruiting RNA polymerase II to the pre-initiation complex (DNA-TBP-TFIIB). This is Transcription initiation factor IIB from Pyrobaculum aerophilum (strain ATCC 51768 / DSM 7523 / JCM 9630 / CIP 104966 / NBRC 100827 / IM2).